The following is a 539-amino-acid chain: Probable protein kinase UbiB (539 aa).

The chain crosses the membrane as a helical span at residues 23–43; the sequence is DLLFALPLPWWMLALRFVLPW. The Protein kinase domain maps to 125–492; it reads RFDEKPLASA…WHDRKDEPVL (368 aa). Residues 131–139 and lysine 153 contribute to the ATP site; that span reads LASASVAQV. The Proton acceptor role is filled by aspartate 288. A run of 2 helical transmembrane segments spans residues 494–514 and 517–537; these read LIGA…SEAA and LLTL…YLIV.

It belongs to the ABC1 family. UbiB subfamily.

The protein resides in the cell inner membrane. It functions in the pathway cofactor biosynthesis; ubiquinone biosynthesis [regulation]. Its function is as follows. Is probably a protein kinase regulator of UbiI activity which is involved in aerobic coenzyme Q (ubiquinone) biosynthesis. In Pseudomonas syringae pv. syringae (strain B728a), this protein is Probable protein kinase UbiB.